Reading from the N-terminus, the 379-residue chain is Chaperone protein DnaJ (379 aa).

The J domain maps to 5 to 70 (DYYEVLGVSR…QKRAAYDQYG (66 aa)). The CR-type zinc finger occupies 134-212 (GVTKEIRIPT…CHGHGRVEKS (79 aa)). Zn(2+) contacts are provided by Cys147, Cys150, Cys164, Cys167, Cys186, Cys189, Cys200, and Cys203. CXXCXGXG motif repeat units follow at residues 147-154 (CDVCHGSG), 164-171 (CPTCHGAG), 186-193 (CPHCHGRG), and 200-207 (CNKCHGHG).

Belongs to the DnaJ family. Homodimer. Zn(2+) serves as cofactor.

The protein localises to the cytoplasm. In terms of biological role, participates actively in the response to hyperosmotic and heat shock by preventing the aggregation of stress-denatured proteins and by disaggregating proteins, also in an autonomous, DnaK-independent fashion. Unfolded proteins bind initially to DnaJ; upon interaction with the DnaJ-bound protein, DnaK hydrolyzes its bound ATP, resulting in the formation of a stable complex. GrpE releases ADP from DnaK; ATP binding to DnaK triggers the release of the substrate protein, thus completing the reaction cycle. Several rounds of ATP-dependent interactions between DnaJ, DnaK and GrpE are required for fully efficient folding. Also involved, together with DnaK and GrpE, in the DNA replication of plasmids through activation of initiation proteins. The polypeptide is Chaperone protein DnaJ (Yersinia pestis bv. Antiqua (strain Antiqua)).